A 498-amino-acid polypeptide reads, in one-letter code: Protein flp (498 aa).

4 helical membrane passes run 6–26, 389–409, 433–453, and 471–491; these read LYFL…IHIT, FNIV…FSAY, LTLC…YLIL, and LALI…LLFL.

It localises to the cell membrane. Functionally, its precise function is unknown. Has no penicillin-binding activity and is not involved in methicillin resistance. This Staphylococcus aureus (strain MW2) protein is Protein flp (flp).